Consider the following 692-residue polypeptide: NAD(P)H-quinone oxidoreductase subunit 5, chloroplastic (692 aa).

A run of 17 helical transmembrane segments spans residues 9 to 29 (WFVP…LFFF), 39 to 59 (LSSF…FHFF), 89 to 109 (LDPL…MVMI), 120 to 140 (GYIK…GLVL), 147 to 167 (VYIF…FWFT), 184 to 204 (IGDF…GSFD), 219 to 239 (NQIN…GPVA), 258 to 278 (TPIS…FLVA), 289 to 309 (FVMS…ATIA), 327 to 347 (LGYM…FHLI), 354 to 374 (ALLF…VGYH), 395 to 415 (AITF…ACFW), 425 to 445 (WLHF…TAFY), 503 to 523 (LFPL…GILF), 555 to 575 (FLFN…IAFY), 643 to 663 (WIID…GESL), and 671 to 691 (ISSY…YSYI).

Belongs to the complex I subunit 5 family. In terms of assembly, NDH is composed of at least 16 different subunits, 5 of which are encoded in the nucleus.

It localises to the plastid. The protein localises to the chloroplast thylakoid membrane. It catalyses the reaction a plastoquinone + NADH + (n+1) H(+)(in) = a plastoquinol + NAD(+) + n H(+)(out). The catalysed reaction is a plastoquinone + NADPH + (n+1) H(+)(in) = a plastoquinol + NADP(+) + n H(+)(out). Functionally, NDH shuttles electrons from NAD(P)H:plastoquinone, via FMN and iron-sulfur (Fe-S) centers, to quinones in the photosynthetic chain and possibly in a chloroplast respiratory chain. The immediate electron acceptor for the enzyme in this species is believed to be plastoquinone. Couples the redox reaction to proton translocation, and thus conserves the redox energy in a proton gradient. In Marchantia polymorpha (Common liverwort), this protein is NAD(P)H-quinone oxidoreductase subunit 5, chloroplastic (ndhF).